Reading from the N-terminus, the 156-residue chain is Small ribosomal subunit protein uS7 (156 aa).

This sequence belongs to the universal ribosomal protein uS7 family. As to quaternary structure, part of the 30S ribosomal subunit. Contacts proteins S9 and S11.

Functionally, one of the primary rRNA binding proteins, it binds directly to 16S rRNA where it nucleates assembly of the head domain of the 30S subunit. Is located at the subunit interface close to the decoding center, probably blocks exit of the E-site tRNA. This is Small ribosomal subunit protein uS7 from Clostridium novyi (strain NT).